The chain runs to 107 residues: U1-lycotoxin-Ls1b (107 aa).

The signal sequence occupies residues 1–20; it reads MMKVLVVVALLPTLISYSSS. The propeptide occupies 21–41; it reads EGIDDLEADELLSLMANEQTR. Intrachain disulfides connect C44-C59, C51-C68, C58-C86, and C70-C84.

The protein belongs to the neurotoxin 19 (CSTX) family. 04 (U1-Lctx) subfamily. As to expression, expressed by the venom gland.

The protein localises to the secreted. This chain is U1-lycotoxin-Ls1b, found in Lycosa singoriensis (Wolf spider).